We begin with the raw amino-acid sequence, 418 residues long: Voltage-gated ClC-type chloride channel ClcB (418 aa).

10 helical membrane passes run 5–25 (LLIA…FRHA), 54–74 (LLTP…WQKF), 146–166 (LWIA…PLAG), 168–188 (LFIA…PVII), 222–242 (ALII…LTLM), 260–280 (LALG…VWGN), 291–311 (APPL…AVLA), 316–336 (GAPG…GMLY), 352–372 (LLLG…APIM), and 380–400 (MTGE…ASVI).

The protein belongs to the chloride channel (TC 2.A.49) family. ClcB subfamily.

It localises to the cell inner membrane. In terms of biological role, probably acts as an electrical shunt for an outwardly-directed proton pump that is linked to amino acid decarboxylation, as part of the extreme acid resistance (XAR) response. The polypeptide is Voltage-gated ClC-type chloride channel ClcB (Escherichia coli O9:H4 (strain HS)).